We begin with the raw amino-acid sequence, 210 residues long: Thymidylate kinase (210 aa).

An ATP-binding site is contributed by 10 to 17 (GPEGAGKS).

Belongs to the thymidylate kinase family.

It carries out the reaction dTMP + ATP = dTDP + ADP. In terms of biological role, phosphorylation of dTMP to form dTDP in both de novo and salvage pathways of dTTP synthesis. This is Thymidylate kinase from Pseudomonas savastanoi pv. phaseolicola (strain 1448A / Race 6) (Pseudomonas syringae pv. phaseolicola (strain 1448A / Race 6)).